Reading from the N-terminus, the 110-residue chain is Proline-rich protein 15-like protein A (110 aa).

2 disordered regions span residues 29 to 51 (IAGDHSSNGGEAPGTTDAATDSQ) and 65 to 110 (TKGR…KSGK). Over residues 65-85 (TKGRHVKVSHSGRFKEKKRIR) the composition is skewed to basic residues. The segment covering 100-110 (TTANENNKSGK) has biased composition (polar residues).

Belongs to the PRR15 family.

In Danio rerio (Zebrafish), this protein is Proline-rich protein 15-like protein A (prr15la).